We begin with the raw amino-acid sequence, 204 residues long: 8-oxoguanine DNA glycosylase/AP lyase (204 aa).

Active-site residues include lysine 129 and aspartate 147.

It belongs to the type-2 OGG1 family.

The enzyme catalyses 2'-deoxyribonucleotide-(2'-deoxyribose 5'-phosphate)-2'-deoxyribonucleotide-DNA = a 3'-end 2'-deoxyribonucleotide-(2,3-dehydro-2,3-deoxyribose 5'-phosphate)-DNA + a 5'-end 5'-phospho-2'-deoxyribonucleoside-DNA + H(+). Functionally, catalyzes the excision of an oxidatively damaged form of guanine (7,8-dihydro-8-oxoguanine = 8-oxoG) from DNA. Also cleaves the DNA backbone at apurinic/apyrimidinic sites (AP sites). Prefers oligomers containing 8-oxoG:C, 8-oxoG:T and 8-oxoG:G base pairs, and is less effective on oligomers containing 8-oxoG:A mispairs. In Thermoplasma volcanium (strain ATCC 51530 / DSM 4299 / JCM 9571 / NBRC 15438 / GSS1), this protein is 8-oxoguanine DNA glycosylase/AP lyase.